Here is a 351-residue protein sequence, read N- to C-terminus: Fructose-1,6-bisphosphatase class 1 (351 aa).

Mg(2+) contacts are provided by glutamate 94, aspartate 113, leucine 115, and aspartate 116. Residues 116 to 119 (DGSS) and asparagine 207 each bind substrate. Glutamate 279 is a binding site for Mg(2+).

It belongs to the FBPase class 1 family. As to quaternary structure, homotetramer. Mg(2+) is required as a cofactor.

It localises to the cytoplasm. It catalyses the reaction beta-D-fructose 1,6-bisphosphate + H2O = beta-D-fructose 6-phosphate + phosphate. It functions in the pathway carbohydrate biosynthesis; gluconeogenesis. This chain is Fructose-1,6-bisphosphatase class 1, found in Methylobacterium radiotolerans (strain ATCC 27329 / DSM 1819 / JCM 2831 / NBRC 15690 / NCIMB 10815 / 0-1).